A 67-amino-acid chain; its full sequence is Large ribosomal subunit protein bL32 (67 aa).

A compositionally biased stretch (basic residues) spans 1–19 (MAVPKRKMSRSNTRARRSQ). A disordered region spans residues 1-21 (MAVPKRKMSRSNTRARRSQWK).

This sequence belongs to the bacterial ribosomal protein bL32 family.

The polypeptide is Large ribosomal subunit protein bL32 (Clavibacter michiganensis subsp. michiganensis (strain NCPPB 382)).